Reading from the N-terminus, the 248-residue chain is Probable transcriptional regulatory protein Acid_5948 (248 aa).

Belongs to the TACO1 family.

Its subcellular location is the cytoplasm. This Solibacter usitatus (strain Ellin6076) protein is Probable transcriptional regulatory protein Acid_5948.